The sequence spans 446 residues: Chromosomal replication initiator protein DnaA (446 aa).

Positions 1–73 (MAAQLNELWQ…INSMKIITTK (73 aa)) are domain I, interacts with DnaA modulators. The domain II stretch occupies residues 73-107 (KKYDIAFLISSEEALETDEDQETDTNNVNTDTSSS). The domain III, AAA+ region stretch occupies residues 108 to 324 (MLNPKYKFDS…GALIRIVAFS (217 aa)). The ATP site is built by Gly152, Gly154, Lys155, and Thr156. Positions 325-446 (SLTNKEISVD…NEITKRFSPK (122 aa)) are domain IV, binds dsDNA.

It belongs to the DnaA family. Oligomerizes as a right-handed, spiral filament on DNA at oriC.

The protein resides in the cytoplasm. Plays an essential role in the initiation and regulation of chromosomal replication. ATP-DnaA binds to the origin of replication (oriC) to initiate formation of the DNA replication initiation complex once per cell cycle. Binds the DnaA box (a 9 base pair repeat at the origin) and separates the double-stranded (ds)DNA. Forms a right-handed helical filament on oriC DNA; dsDNA binds to the exterior of the filament while single-stranded (ss)DNA is stabiized in the filament's interior. The ATP-DnaA-oriC complex binds and stabilizes one strand of the AT-rich DNA unwinding element (DUE), permitting loading of DNA polymerase. After initiation quickly degrades to an ADP-DnaA complex that is not apt for DNA replication. Binds acidic phospholipids. This is Chromosomal replication initiator protein DnaA from Clostridium acetobutylicum (strain ATCC 824 / DSM 792 / JCM 1419 / IAM 19013 / LMG 5710 / NBRC 13948 / NRRL B-527 / VKM B-1787 / 2291 / W).